The following is a 488-amino-acid chain: G-patch domain and KOW motifs-containing protein (488 aa).

Residues 1–11 (MAGRESPPPSA) are compositionally biased toward pro residues. Residues 1–20 (MAGRESPPPSAPSMAPISFG) are disordered. Residue Ala2 is modified to N-acetylalanine. Ser25 is subject to Phosphoserine; by PKA. The tract at residues 72 to 97 (IQNGSRRQPLSKNPKPSSETSTVLMS) is disordered. Residues 73–95 (QNGSRRQPLSKNPKPSSETSTVL) show a composition bias toward polar residues. Position 115 is a phosphoserine (Ser115). The region spanning 164-210 (VEAYGLAMLRGMGWKPGKGIGNTFSQVVKPRVNSIRPKGLGLGANRM) is the G-patch domain. Disordered stretches follow at residues 216 to 241 (ASVG…PQGL) and 295 to 367 (QEFD…PRNK). The segment covering 224-236 (PRPDGDRENDKEG) has biased composition (basic and acidic residues). The KOW 1 domain occupies 231–258 (ENDKEGQPQGLMHGRAVVVLSGPYRGLY). The segment covering 307–331 (VSQTSTEQQNRATGTASSLKAAQNQ) has biased composition (polar residues). Composition is skewed to basic and acidic residues over residues 332–341 (EDSKRRQKGS) and 349–363 (PDRQ…EKAA). A KOW 2 domain is found at 401–428 (PDTCVCRTDEGRVLEDVREDMLETLIPK). Ser485 carries the post-translational modification Phosphoserine.

This sequence belongs to the MOS2 family. As to quaternary structure, component of the minor spliceosome, which splices U12-type introns. Interacts with PRKX, PRKACB and DHX16. In terms of processing, phosphorylation regulates its ability to bind RNA.

It localises to the nucleus. Functionally, RNA-binding protein involved in pre-mRNA splicing. As a component of the minor spliceosome, involved in the splicing of U12-type introns in pre-mRNAs. The sequence is that of G-patch domain and KOW motifs-containing protein (Gpkow) from Mus musculus (Mouse).